The sequence spans 172 residues: Macro domain-containing protein lp_3408 (172 aa).

The 171-residue stretch at 1-171 (MVEIKVIHGD…VFSTALAALT (171 aa)) folds into the Macro domain.

It belongs to the MacroD-type family.

The polypeptide is Macro domain-containing protein lp_3408 (Lactiplantibacillus plantarum (strain ATCC BAA-793 / NCIMB 8826 / WCFS1) (Lactobacillus plantarum)).